The chain runs to 333 residues: UPF0285 protein MTH_1441 (333 aa).

Belongs to the UPF0285 family.

The sequence is that of UPF0285 protein MTH_1441 from Methanothermobacter thermautotrophicus (strain ATCC 29096 / DSM 1053 / JCM 10044 / NBRC 100330 / Delta H) (Methanobacterium thermoautotrophicum).